The primary structure comprises 223 residues: Ribosomal RNA small subunit methyltransferase G (223 aa).

S-adenosyl-L-methionine-binding residues include G85, F90, and R154.

This sequence belongs to the methyltransferase superfamily. RNA methyltransferase RsmG family.

The protein localises to the cytoplasm. The catalysed reaction is guanosine(527) in 16S rRNA + S-adenosyl-L-methionine = N(7)-methylguanosine(527) in 16S rRNA + S-adenosyl-L-homocysteine. Specifically methylates the N7 position of guanine in position 527 of 16S rRNA. This chain is Ribosomal RNA small subunit methyltransferase G, found in Rhodopseudomonas palustris (strain TIE-1).